Reading from the N-terminus, the 377-residue chain is DNA primase small subunit PriS (377 aa).

Residues Asp-99, Asp-101, and Asp-274 contribute to the active site.

This sequence belongs to the eukaryotic-type primase small subunit family. In terms of assembly, heterodimer of a small subunit (PriS) and a large subunit (PriL). Requires Mg(2+) as cofactor. It depends on Mn(2+) as a cofactor.

Catalytic subunit of DNA primase, an RNA polymerase that catalyzes the synthesis of short RNA molecules used as primers for DNA polymerase during DNA replication. The small subunit contains the primase catalytic core and has DNA synthesis activity on its own. Binding to the large subunit stabilizes and modulates the activity, increasing the rate of DNA synthesis while decreasing the length of the DNA fragments, and conferring RNA synthesis capability. The DNA polymerase activity may enable DNA primase to also catalyze primer extension after primer synthesis. May also play a role in DNA repair. This Staphylothermus marinus (strain ATCC 43588 / DSM 3639 / JCM 9404 / F1) protein is DNA primase small subunit PriS.